Reading from the N-terminus, the 1441-residue chain is MEDKKQQQQQQREEAEAEEEAPVVPSSLRAAATCRSLSSLSSSLRWDHRGDDDEEEAELRWAAIERLPTLDRMRTSVLSSEAVDVRRLGAAQRRVLVERLVADIQRDNLRLLRKQRRRMERVGVRQPTVEVRWRNVRVEADCQVVSGKPLPTLLNTVLATARGLSRRPHARIPILNDVTGILKPSRLTLLLGPPGCGKTTLLLALAGKLDKNLKVTGEVEYNGANLNTFVPEKTSAYISQYDLHVPEMTVRETLDFSARFQGVGTRAEIMKEVIRREKEAGITPDPDIDTYMKAISVEGLERSMQTDYIMKIMGLDICADIIVGDIMRRGISGGEKKRLTTGEMIVGPSRALFMDEISTGLDSSTTFQIVSCLQQVAHISESTILVSLLQPAPETYDLFDDIILMAEGKIVYHGSKSCIMNFFESCGFKCPERKGAADFLQEVLSKKDQQQYWSRTEETYNFVTIDHFCEKFKASQVGQNLVEELANPFDKSEVYNNALSLNIYSLTKWDLLKACFAREILLMRRNAFIYITKVVQLGLLAVITGTVFLRTHMGVDRAHADYYMGSLFYALILLLVNGFPELAIAVSRLPVFYKQRDYYFYPAWAYAIPSFILKIPLSLVESITWTSISYYLIGYTPEASRFFCQLLILFLVHTGALSLFRCVASYCQTMVASSVGGTMSFLVILLFGGFIIPRLSMPNWLKWGFWISPLSYAEIGLTGNEFLAPRWLKTTTSGVTLGRRVLMDRGLDFSSYFYWISASALIGFILLLNVGYAIGLTIKKPTGTSRAIISRDKFSTFDRRGKDMSKDMDNRMPKLQVGNALAPNKTGTMVLPFSPLTISFQDVNYYVDTPVEMREQGYKERKLQLLHNITGAFQPGVLSALMGVTGAGKTTLLDVLAGRKTGGVIEGDIRVGGYPKIQQTFARISGYCEQTDVHSPQITVEESVAYSAWLRLPTEVDSKTRREFVDEVIQTIELDDIRDALVGLPGVSGLSTEQRKRLTIAVELVSNPSVIFMDEPTSGLDARAAAIVMRAVKNVADTGRTVVCTIHQPSIEIFEAFDELMLMKRGGELIYAGPLGLHSCNVIHYFETIPGVPKIKDNYNPSTWMLEVTCASMEAQLGVDFAQIYRESTMCKDKDALVKSLSKPALGTSDLHFPTRFPQKFREQLKACIWKQCLSYWRSPSYNLVRILFITISCIVFGVLFWQQGDINHINDQQGLFTILGCMYGTTLFTGINNCQSVIPFISIERSVVYRERFAGMYSPWAYSLAQVAMEIPYVLVQILLIMFIAYPMIGYAWTAAKFFWFMYTIACTLLYFLYFGMMIVSLTPNIQVASILASMFYTLQNLMSGFIVPAPQIPRWWIWLYYTSPLSWTLNVFFTTQFGDEHQKEISVFGETKSVAAFIKDYFGFRHDLLPLAAIILAMFPILFAILFGLSISKLNFQRR.

Positions Met-1–Glu-14 are enriched in basic and acidic residues. Residues Met-1–Leu-28 are disordered. One can recognise an ABC transporter 1 domain in the interval Ala-159–Glu-432. Gly-192–Thr-199 contacts ATP. Positions Asp-510–Phe-722 constitute an ABC transmembrane type-2 1 domain. 6 consecutive transmembrane segments (helical) span residues Phe-528 to Phe-548, Ser-566 to Val-586, Phe-600 to Val-620, Phe-642 to Cys-662, Ala-672 to Ile-692, and Ala-758 to Ile-778. The ABC transporter 2 domain occupies Ile-838–Pro-1090. Gly-883–Thr-890 is an ATP binding site. The ABC transmembrane type-2 2 domain occupies Glu-1163–Phe-1379. 7 helical membrane passes run Ile-1187–Ile-1207, Gly-1215–Cys-1235, Ile-1272–Tyr-1292, Phe-1300–Ile-1320, Val-1329–Val-1349, Trp-1357–Thr-1377, and Leu-1413–Ile-1433.

This sequence belongs to the ABC transporter superfamily. ABCG family. PDR (TC 3.A.1.205) subfamily.

The protein resides in the membrane. Its function is as follows. May be a general defense protein. This chain is ABC transporter G family member 41, found in Oryza sativa subsp. japonica (Rice).